Here is a 378-residue protein sequence, read N- to C-terminus: Spermidine/putrescine import ATP-binding protein PotA (378 aa).

An ABC transporter domain is found at 18 to 248 (VQLAGIRKCF…PKNLFVAGFI (231 aa)). Residue 50–57 (GPSGCGKT) participates in ATP binding.

Belongs to the ABC transporter superfamily. Spermidine/putrescine importer (TC 3.A.1.11.1) family. As to quaternary structure, the complex is composed of two ATP-binding proteins (PotA), two transmembrane proteins (PotB and PotC) and a solute-binding protein (PotD).

It is found in the cell inner membrane. It carries out the reaction ATP + H2O + polyamine-[polyamine-binding protein]Side 1 = ADP + phosphate + polyamineSide 2 + [polyamine-binding protein]Side 1.. Functionally, part of the ABC transporter complex PotABCD involved in spermidine/putrescine import. Responsible for energy coupling to the transport system. The protein is Spermidine/putrescine import ATP-binding protein PotA of Escherichia coli O1:K1 / APEC.